The primary structure comprises 98 residues: MEFEITSDTRNELLGRRELRFILTYDGATPSRKEIRGKLCALNNINENLVVLDSLRTGYGRMQLDGFMRIYDTEEGRQRTERSYLLNRGEPKKEEEEA.

The tract at residues 76–98 (GRQRTERSYLLNRGEPKKEEEEA) is disordered. The segment covering 89 to 98 (GEPKKEEEEA) has biased composition (basic and acidic residues).

It belongs to the eukaryotic ribosomal protein eS24 family.

This chain is Small ribosomal subunit protein eS24, found in Methanosphaerula palustris (strain ATCC BAA-1556 / DSM 19958 / E1-9c).